Here is a 698-residue protein sequence, read N- to C-terminus: Elongation factor G (698 aa).

Residues 10-285 (ASTRNIGIMA…AVVDFLPNPL (276 aa)) enclose the tr-type G domain. Residues 19–26 (AHIDAGKT), 83–87 (DTPGH), and 137–140 (NKMD) contribute to the GTP site.

Belongs to the TRAFAC class translation factor GTPase superfamily. Classic translation factor GTPase family. EF-G/EF-2 subfamily.

The protein resides in the cytoplasm. In terms of biological role, catalyzes the GTP-dependent ribosomal translocation step during translation elongation. During this step, the ribosome changes from the pre-translocational (PRE) to the post-translocational (POST) state as the newly formed A-site-bound peptidyl-tRNA and P-site-bound deacylated tRNA move to the P and E sites, respectively. Catalyzes the coordinated movement of the two tRNA molecules, the mRNA and conformational changes in the ribosome. In Frankia alni (strain DSM 45986 / CECT 9034 / ACN14a), this protein is Elongation factor G.